The chain runs to 359 residues: 3-dehydroquinate synthase (359 aa).

NAD(+) is bound by residues 69 to 74 (DGEQHK), 103 to 107 (GVIGD), 127 to 128 (TT), K140, K149, and 167 to 170 (TLDT). 3 residues coordinate Zn(2+): E182, H245, and H262.

The protein belongs to the sugar phosphate cyclases superfamily. Dehydroquinate synthase family. Co(2+) serves as cofactor. Requires Zn(2+) as cofactor. NAD(+) is required as a cofactor.

The protein localises to the cytoplasm. The enzyme catalyses 7-phospho-2-dehydro-3-deoxy-D-arabino-heptonate = 3-dehydroquinate + phosphate. Its pathway is metabolic intermediate biosynthesis; chorismate biosynthesis; chorismate from D-erythrose 4-phosphate and phosphoenolpyruvate: step 2/7. Functionally, catalyzes the conversion of 3-deoxy-D-arabino-heptulosonate 7-phosphate (DAHP) to dehydroquinate (DHQ). This is 3-dehydroquinate synthase from Nitrosococcus oceani (strain ATCC 19707 / BCRC 17464 / JCM 30415 / NCIMB 11848 / C-107).